Consider the following 323-residue polypeptide: Chitin-binding lectin 1 (323 aa).

Residues 1–22 (MKETAISVLALLTLFLLEVVSA) form the signal peptide. Pro50, Pro51, Pro53, and Pro55 each carry 4-hydroxyproline. 4 O-linked (Ara...) hydroxyproline glycosylation sites follow: Pro50, Pro51, Pro53, and Pro55. 2 Chitin-binding type-1 domains span residues 58–101 (YPQC…QCPG) and 105–149 (EGRC…QCKL). Disulfide bonds link Cys61–Cys77, Cys70–Cys83, Cys76–Cys90, Cys95–Cys99, Cys108–Cys125, Cys117–Cys131, Cys124–Cys138, and Cys143–Cys147. 4 residues coordinate chitin: Ser78, Trp80, Trp82, and Tyr89. Residues 150–210 (PSPPPPPPPP…PPPPPPALPY (61 aa)) form an extensin-like region. Residue Ser151 is glycosylated (O-linked (Gal) serine). Tandem repeats lie at residues 151-159 (SPPPPPPPP), 160-164 (SPPPP), 165-167 (SPP), 168-172 (SPPPP), 173-180 (SPPPPPPP), 181-185 (SPPPP), 186-190 (SPPPP), 191-192 (SP), 193-198 (SPPPPP), and 200-206 (SPPPPPP). The segment at 151 to 206 (SPPPPPPPPSPPPPSPPSPPPPSPPPPPPPSPPPPSPPPPSPSPPPPPASPPPPPP) is 10 X approximate repeats of S-P-P-P-P. 8 positions are modified to 4-hydroxyproline: Pro152, Pro153, Pro154, Pro155, Pro156, Pro157, Pro158, and Pro159. 8 O-linked (Ara...) hydroxyproline glycosylation sites follow: Pro152, Pro153, Pro154, Pro155, Pro156, Pro157, Pro158, and Pro159. Residues 154-203 (PPPPPPSPPPPSPPSPPPPSPPPPPPPSPPPPSPPPPSPSPPPPPASPPP) are disordered. A glycan (O-linked (Gal) serine) is linked at Ser160. 4 positions are modified to 4-hydroxyproline: Pro161, Pro162, Pro163, and Pro164. Residues Pro161, Pro162, Pro163, and Pro164 are each glycosylated (O-linked (Ara...) hydroxyproline). O-linked (Gal) serine glycosylation occurs at Ser165. A 4-hydroxyproline mark is found at Pro166 and Pro167. O-linked (Ara...) hydroxyproline glycans are attached at residues Pro166 and Pro167. Residue Ser168 is glycosylated (O-linked (Gal) serine). 4-hydroxyproline occurs at positions 169, 170, 171, and 172. Pro169, Pro170, Pro171, and Pro172 each carry an O-linked (Ara...) hydroxyproline glycan. Residue Ser173 is glycosylated (O-linked (Gal) serine). A 4-hydroxyproline mark is found at Pro174, Pro175, Pro176, Pro177, Pro178, Pro179, and Pro180. O-linked (Ara...) hydroxyproline glycans are attached at residues Pro174, Pro175, Pro176, Pro177, Pro178, Pro179, and Pro180. The O-linked (Gal) serine glycan is linked to Ser181. Residues Pro182, Pro183, Pro184, and Pro185 each carry the 4-hydroxyproline modification. O-linked (Ara...) hydroxyproline glycosylation is found at Pro182, Pro183, Pro184, and Pro185. Ser186 carries O-linked (Gal) serine glycosylation. Residues Pro187, Pro188, Pro189, and Pro190 each carry the 4-hydroxyproline modification. Pro187, Pro188, Pro189, and Pro190 each carry an O-linked (Ara...) hydroxyproline glycan. A glycan (O-linked (Gal) serine) is linked at Ser191. Pro192 carries the post-translational modification 4-hydroxyproline. Pro192 carries O-linked (Ara...) hydroxyproline glycosylation. O-linked (Gal) serine glycosylation is present at Ser193. 5 positions are modified to 4-hydroxyproline: Pro194, Pro195, Pro196, Pro197, and Pro198. Residues Pro194, Pro195, Pro196, Pro197, and Pro198 are each glycosylated (O-linked (Ara...) hydroxyproline). Ser200 is a glycosylation site (O-linked (Gal) serine). Residues Pro201, Pro202, Pro203, Pro204, Pro205, Pro206, and Pro209 each carry the 4-hydroxyproline modification. Pro201, Pro202, Pro203, Pro204, Pro205, Pro206, and Pro209 each carry an O-linked (Ara...) hydroxyproline glycan. Chitin-binding type-1 domains follow at residues 210–253 (YPQC…QCPG) and 257–301 (EGRC…QCNT). 8 disulfide bridges follow: Cys213–Cys229, Cys222–Cys235, Cys228–Cys242, Cys247–Cys251, Cys260–Cys277, Cys269–Cys283, Cys276–Cys290, and Cys295–Cys299. Chitin-binding residues include Ser230, Trp232, Trp234, and Tyr241.

In the central section; belongs to the extensin family. As to quaternary structure, homodimer. Post-translationally, heavily glycosylated with beta-arabinose on hydroxyprolines and with alpha-galactose on serines of the extensin-like domain. As no other sugars could be detected in the native lectin, it is unlikely that the three putative N-glycosylation sites are actually glycosylated. The N-terminus is blocked. The N-terminal sequences proposed in PubMed:9022287 and PubMed:11056399 originate probably from truncated proteins.

Its function is as follows. This protein might function as a defense against chitin containing pathogens. Binds to several branched or linear N-acetyllactosamine-containing glycosphingolipids and also to lactosylceramide with sphingosine and non-hydroxy fatty acids. This Solanum tuberosum (Potato) protein is Chitin-binding lectin 1.